The chain runs to 152 residues: Putative pre-16S rRNA nuclease (152 aa).

This sequence belongs to the YqgF nuclease family.

The protein resides in the cytoplasm. Functionally, could be a nuclease involved in processing of the 5'-end of pre-16S rRNA. The protein is Putative pre-16S rRNA nuclease of Nitrosococcus oceani (strain ATCC 19707 / BCRC 17464 / JCM 30415 / NCIMB 11848 / C-107).